The chain runs to 209 residues: Large ribosomal subunit protein eL13 (209 aa).

The protein belongs to the eukaryotic ribosomal protein eL13 family. In terms of assembly, component of the 60S large ribosomal subunit (LSU).

The protein localises to the cytoplasm. Functionally, component of the ribosome, a large ribonucleoprotein complex responsible for the synthesis of proteins in the cell. The small ribosomal subunit (SSU) binds messenger RNAs (mRNAs) and translates the encoded message by selecting cognate aminoacyl-transfer RNA (tRNA) molecules. The large subunit (LSU) contains the ribosomal catalytic site termed the peptidyl transferase center (PTC), which catalyzes the formation of peptide bonds, thereby polymerizing the amino acids delivered by tRNAs into a polypeptide chain. The nascent polypeptides leave the ribosome through a tunnel in the LSU and interact with protein factors that function in enzymatic processing, targeting, and the membrane insertion of nascent chains at the exit of the ribosomal tunnel. As part of the LSU, it is probably required for its formation and the maturation of rRNAs. This Dictyostelium discoideum (Social amoeba) protein is Large ribosomal subunit protein eL13 (rpl13).